The following is a 255-amino-acid chain: Type III pantothenate kinase (255 aa).

An ATP-binding site is contributed by 6–13; sequence DIGNSNIV. Substrate is bound by residues Tyr-100 and 107–110; that span reads GSDR. Asp-109 (proton acceptor) is an active-site residue. Residue Asp-129 coordinates K(+). Residue Thr-132 coordinates ATP. Substrate is bound at residue Thr-184.

Belongs to the type III pantothenate kinase family. Homodimer. It depends on NH4(+) as a cofactor. K(+) serves as cofactor.

The protein localises to the cytoplasm. The enzyme catalyses (R)-pantothenate + ATP = (R)-4'-phosphopantothenate + ADP + H(+). Its pathway is cofactor biosynthesis; coenzyme A biosynthesis; CoA from (R)-pantothenate: step 1/5. Its function is as follows. Catalyzes the phosphorylation of pantothenate (Pan), the first step in CoA biosynthesis. The protein is Type III pantothenate kinase of Brevibacillus brevis (strain 47 / JCM 6285 / NBRC 100599).